A 568-amino-acid chain; its full sequence is Proton-coupled zinc antiporter SLC30A9, mitochondrial (568 aa).

The N-terminal 67 residues, 1–67, are a transit peptide targeting the mitochondrion; sequence MLPGLAAAAA…IGTLSQVKLY (67 aa). Transmembrane regions (helical) follow at residues 239–259, 314–334, 342–362, 392–412, and 424–444; these read VVMVAICINGLNCFFKFLAWI, GVGIFMMGAGLSWYHGVMGLL, LLWAYCILAGSLVSEGATLLV, VILLEDTAAVLGVIIAATCMG, and SLGSLGVGTLLGMVSAFLIYT. Positions 462-466 match the LXXLL motif motif; it reads LTELL.

Belongs to the cation diffusion facilitator (CDF) transporter (TC 2.A.4) family. SLC30A subfamily. Interacts with GRIP1, ESR1 and AR. Ubiquitously expressed in fetal and adult tissues and cancer cell lines.

The protein localises to the mitochondrion membrane. It is found in the nucleus. Its subcellular location is the endoplasmic reticulum. The enzyme catalyses Zn(2+)(in) + 2 H(+)(out) = Zn(2+)(out) + 2 H(+)(in). In terms of biological role, mitochondrial proton-coupled zinc ion antiporter mediating the export of zinc from the mitochondria and involved in zinc homeostasis, zinc mobilization as well as mitochondrial morphology and health. In nucleus, functions as a secondary coactivator for nuclear receptors by cooperating with p160 coactivators subtypes. Plays a role in transcriptional activation of Wnt-responsive genes. This is Proton-coupled zinc antiporter SLC30A9, mitochondrial from Homo sapiens (Human).